The chain runs to 481 residues: Glutamate--tRNA ligase 2 (481 aa).

The short motif at 17-27 (PSPTGFLHIGG) is the 'HIGH' region element. Residues 118–139 (AEQRAKKQPQRYDGRWRDRDPS) are compositionally biased toward basic and acidic residues. The disordered stretch occupies residues 118–143 (AEQRAKKQPQRYDGRWRDRDPSEAPA). The 'KMSKS' region motif lies at 246 to 250 (KLSKR). Lys249 provides a ligand contact to ATP.

It belongs to the class-I aminoacyl-tRNA synthetase family. Glutamate--tRNA ligase type 1 subfamily. Monomer.

It localises to the cytoplasm. It catalyses the reaction tRNA(Glu) + L-glutamate + ATP = L-glutamyl-tRNA(Glu) + AMP + diphosphate. Functionally, catalyzes the attachment of glutamate to tRNA(Glu) in a two-step reaction: glutamate is first activated by ATP to form Glu-AMP and then transferred to the acceptor end of tRNA(Glu). This Zymomonas mobilis subsp. mobilis (strain ATCC 31821 / ZM4 / CP4) protein is Glutamate--tRNA ligase 2.